Here is a 178-residue protein sequence, read N- to C-terminus: Cell division protein SepF (178 aa).

Over residues 21 to 46 (YESEQSVATHHDEERPQAQEREERRA) the composition is skewed to basic and acidic residues. Residues 21 to 65 (YESEQSVATHHDEERPQAQEREERRAPAPVREVVREMPTVDAEEE) form a disordered region.

It belongs to the SepF family. In terms of assembly, homodimer. Interacts with FtsZ.

The protein resides in the cytoplasm. Its function is as follows. Cell division protein that is part of the divisome complex and is recruited early to the Z-ring. Probably stimulates Z-ring formation, perhaps through the cross-linking of FtsZ protofilaments. Its function overlaps with FtsA. The polypeptide is Cell division protein SepF (Paenarthrobacter aurescens (strain TC1)).